The primary structure comprises 273 residues: 4-hydroxy-tetrahydrodipicolinate reductase (273 aa).

Residues 8 to 13, Glu34, 102 to 104, and 128 to 131 each bind NAD(+); these read GAAGRM, GTT, and SSNM. The active-site Proton donor/acceptor is His160. Residue His161 coordinates (S)-2,3,4,5-tetrahydrodipicolinate. The active-site Proton donor is Lys164. 170–171 provides a ligand contact to (S)-2,3,4,5-tetrahydrodipicolinate; it reads GT.

This sequence belongs to the DapB family.

It is found in the cytoplasm. The catalysed reaction is (S)-2,3,4,5-tetrahydrodipicolinate + NAD(+) + H2O = (2S,4S)-4-hydroxy-2,3,4,5-tetrahydrodipicolinate + NADH + H(+). It catalyses the reaction (S)-2,3,4,5-tetrahydrodipicolinate + NADP(+) + H2O = (2S,4S)-4-hydroxy-2,3,4,5-tetrahydrodipicolinate + NADPH + H(+). Its pathway is amino-acid biosynthesis; L-lysine biosynthesis via DAP pathway; (S)-tetrahydrodipicolinate from L-aspartate: step 4/4. Functionally, catalyzes the conversion of 4-hydroxy-tetrahydrodipicolinate (HTPA) to tetrahydrodipicolinate. This is 4-hydroxy-tetrahydrodipicolinate reductase from Methanobrevibacter smithii (strain ATCC 35061 / DSM 861 / OCM 144 / PS).